The chain runs to 678 residues: Secretin ExeD (678 aa).

The first 25 residues, 1-25 (MINKGKGWRLATVAAALMMAGSAWA), serve as a signal peptide directing secretion. Residues 26–122 (TEYSASFKNA…VVDETNPGIG (97 aa)) form an N0 region. The interval 124–188 (EMVTRVVPVR…EVVRRVDKAG (65 aa)) is N1. An N2 region spans residues 189–264 (DQEVDIIKLK…MVRQLDRDLQ (76 aa)). Residues 267–348 (GNTRVFYLKY…ELEQVVAKLD (82 aa)) are N3. Residues 353–602 (QVLVEAIIVE…VFIRPTILRD (250 aa)) form a secretin region. A s domain region spans residues 604–678 (NVYSGISSNK…GVQPFVQGNK (75 aa)).

It belongs to the bacterial secretin family. GSP D subfamily. Forms a cylindrical channel with 15 subunits.

Its subcellular location is the cell outer membrane. Functionally, involved in a type II secretion system (T2SS, formerly general secretion pathway, GSP) for the export of proteins. This subunit forms the outer membrane channel. The sequence is that of Secretin ExeD (exeD) from Aeromonas hydrophila.